The sequence spans 377 residues: Nitric oxide reductase FlRd-NAD(+) reductase (377 aa).

This sequence belongs to the FAD-dependent oxidoreductase family. It depends on FAD as a cofactor.

Its subcellular location is the cytoplasm. The enzyme catalyses 2 reduced [nitric oxide reductase rubredoxin domain] + NAD(+) + H(+) = 2 oxidized [nitric oxide reductase rubredoxin domain] + NADH. It participates in nitrogen metabolism; nitric oxide reduction. Functionally, one of at least two accessory proteins for anaerobic nitric oxide (NO) reductase. Reduces the rubredoxin moiety of NO reductase. This chain is Nitric oxide reductase FlRd-NAD(+) reductase, found in Klebsiella pneumoniae (strain 342).